We begin with the raw amino-acid sequence, 897 residues long: DNA mismatch repair protein MutS (897 aa).

654 to 661 (GPNMAGKS) is an ATP binding site.

The protein belongs to the DNA mismatch repair MutS family.

Its function is as follows. This protein is involved in the repair of mismatches in DNA. It is possible that it carries out the mismatch recognition step. This protein has a weak ATPase activity. This chain is DNA mismatch repair protein MutS, found in Maricaulis maris (strain MCS10) (Caulobacter maris).